The sequence spans 602 residues: Proteasome-associated ATPase (602 aa).

Residues 1-13 are compositionally biased toward basic and acidic residues; it reads MQHDLPGGRHDEA. The segment at 1 to 33 is disordered; that stretch reads MQHDLPGGRHDEADSSETGGAGTTENPSSEQAR. The span at 23-32 shows a compositional bias: polar residues; that stretch reads TTENPSSEQA. Residues 28–103 adopt a coiled-coil conformation; sequence SSEQARQIRF…LREEVDRLAQ (76 aa). Residue 291–296 participates in ATP binding; it reads GCGKTL. The segment at 601–602 is docks into pockets in the proteasome alpha-ring; it reads YL.

The protein belongs to the AAA ATPase family. As to quaternary structure, homohexamer. Assembles into a hexameric ring structure that caps the 20S proteasome core. Strongly interacts with the prokaryotic ubiquitin-like protein Pup through a hydrophobic interface; the interacting region of ARC lies in its N-terminal coiled-coil domain. There is one Pup binding site per ARC hexamer ring. Upon ATP-binding, the C-terminus of ARC interacts with the alpha-rings of the proteasome core, possibly by binding to the intersubunit pockets.

It participates in protein degradation; proteasomal Pup-dependent pathway. Functionally, ATPase which is responsible for recognizing, binding, unfolding and translocation of pupylated proteins into the bacterial 20S proteasome core particle. May be essential for opening the gate of the 20S proteasome via an interaction with its C-terminus, thereby allowing substrate entry and access to the site of proteolysis. Thus, the C-termini of the proteasomal ATPase may function like a 'key in a lock' to induce gate opening and therefore regulate proteolysis. In Saccharomonospora viridis (strain ATCC 15386 / DSM 43017 / JCM 3036 / CCUG 5913 / NBRC 12207 / NCIMB 9602 / P101) (Thermoactinomyces viridis), this protein is Proteasome-associated ATPase.